A 497-amino-acid polypeptide reads, in one-letter code: Actin-binding protein WASF2 (497 aa).

Disordered regions lie at residues 173–203 (KEKR…KEEW) and 239–436 (ENVD…SDAR). The segment covering 252–263 (SDSASSPSPSFS) has biased composition (low complexity). Pro residues-rich tracts occupy residues 298–335 (SHPP…PPLP) and 343–403 (GTPP…PPLP). The WH2 domain maps to 435–452 (ARSDLLSAIRQGFQLRRV). At serine 473 the chain carries Phosphoserine.

This sequence belongs to the SCAR/WAVE family. As to quaternary structure, binds actin and the Arp2/3 complex. Interacts with BAIAP2. Component of the WAVE2 complex composed of ABI1, CYFIP1/SRA1, NCKAP1/NAP1 (NCKAP1l/HEM1 in hematopoietic cells) and WASF2/WAVE2. Directly interacts with BRK1. Interacts with human cytomegalovirus protein UL135. Interacts with FNBP1L (via the SH3 domain).

It localises to the cytoplasm. The protein resides in the cytoskeleton. Its subcellular location is the cell projection. It is found in the lamellipodium. The protein localises to the basolateral cell membrane. Its function is as follows. Downstream effector molecule involved in the transmission of signals from tyrosine kinase receptors and small GTPases to the actin cytoskeleton. Promotes formation of actin filaments. Part of the WAVE complex that regulates lamellipodia formation. The WAVE complex regulates actin filament reorganization via its interaction with the Arp2/3 complex. The sequence is that of Actin-binding protein WASF2 from Mus musculus (Mouse).